The sequence spans 162 residues: NADH-quinone oxidoreductase subunit I (162 aa).

4Fe-4S ferredoxin-type domains follow at residues 53-83 (LRRY…IESE) and 93-122 (TRYD…ETRV). [4Fe-4S] cluster-binding residues include Cys63, Cys66, Cys69, Cys73, Cys102, Cys105, Cys108, and Cys112.

It belongs to the complex I 23 kDa subunit family. In terms of assembly, NDH-1 is composed of 14 different subunits. Subunits NuoA, H, J, K, L, M, N constitute the membrane sector of the complex. [4Fe-4S] cluster is required as a cofactor.

It is found in the cell inner membrane. It carries out the reaction a quinone + NADH + 5 H(+)(in) = a quinol + NAD(+) + 4 H(+)(out). Its function is as follows. NDH-1 shuttles electrons from NADH, via FMN and iron-sulfur (Fe-S) centers, to quinones in the respiratory chain. The immediate electron acceptor for the enzyme in this species is believed to be ubiquinone. Couples the redox reaction to proton translocation (for every two electrons transferred, four hydrogen ions are translocated across the cytoplasmic membrane), and thus conserves the redox energy in a proton gradient. The sequence is that of NADH-quinone oxidoreductase subunit I from Nitrosomonas europaea (strain ATCC 19718 / CIP 103999 / KCTC 2705 / NBRC 14298).